Reading from the N-terminus, the 375-residue chain is MQCALYDAGRCRSCQWITQPIPEQLSAKTADLKNLLADFPVEEWCAPVSGPEQGFRNKAKMVVSGSVEKPLLGMLHRDGTPEDLCDCPLYPASFAPVFAALKPFIARAGLTPYNVARKRGELKYILLTESQSDGGMMLRFVLRSETKLAQLRKALPWLQEQLPQLKVITVNIQPVHMAIMEGETEIYLTEQQALAERFNDVPLWIRPQSFFQTNPAVASQLYATARDWVRQLPVKHMWDLFCGVGGFGLHCATPDMQLTGIEIASEAIACAKQSAAELGLTRLQFQALDSTQFATAQGEVPELVLVNPPRRGIGKPLCDYLSTMAPRFIIYSSCNAQTMAKDVRELPGYRIERVQLFDMFPHTAHYEVLTLLVKQ.

Residues Cys-3, Cys-11, Cys-14, and Cys-87 each contribute to the [4Fe-4S] cluster site. Positions 212, 241, 262, and 307 each coordinate S-adenosyl-L-methionine. Catalysis depends on Cys-334, which acts as the Nucleophile.

The protein belongs to the class I-like SAM-binding methyltransferase superfamily. RNA M5U methyltransferase family. RlmC subfamily.

It carries out the reaction uridine(747) in 23S rRNA + S-adenosyl-L-methionine = 5-methyluridine(747) in 23S rRNA + S-adenosyl-L-homocysteine + H(+). In terms of biological role, catalyzes the formation of 5-methyl-uridine at position 747 (m5U747) in 23S rRNA. This is 23S rRNA (uracil(747)-C(5))-methyltransferase RlmC from Escherichia coli (strain SE11).